We begin with the raw amino-acid sequence, 396 residues long: MLGFLSARQTGLEDPLRLRRAESTRRVLGLELNKDRDVERIHGGGINTLDIEPVEGRYMLSGGSDGVIVLYDLENSSRQSYYTCKAVCSIGRDHPDVHRYSVETVQWYPHDTGMFTSSSFDKTLKVWDTNTLQTADVFNFEETVYSHHMSPVSTKHCLVAVGTRGPKVQLCDLKSGSCSHILQGHRQEILAVSWSPRYDYILATASADSRVKLWDVRRASGCLITLDQHNGKKSQAVESANTAHNGKVNGLCFTSDGLHLLTVGTDNRMRLWNSSNGENTLVNYGKVCNNSKKGLKFTVSCGCSSEFVFVPYGSTIAVYTVYSGEQITMLKGHYKTVDCCVFQSNFQELYSGSRDCNILAWVPSLYEPVPDDDETTTKSQLNPAFEDAWSSSDEEG.

WD repeat units follow at residues asparagine 33–leucine 73, cysteine 88–threonine 129, glutamine 133–leucine 173, serine 177–valine 216, glutamine 235–serine 274, leucine 281–valine 321, and glutamate 325–proline 363. The disordered stretch occupies residues aspartate 371–glycine 396. Serine 390, serine 391, and serine 392 each carry phosphoserine.

In terms of assembly, part of the CSA complex (also named DCX(ERCC8) complex), a DCX E3 ubiquitin-protein ligase complex containing ERCC8, RBX1, DDB1 and CUL4A; the CSA complex interacts with RNA polymerase II; upon UV irradiation it interacts with the COP9 signalosome and preferentially with the hyperphosphorylated form of RNA polymerase II. Interacts with ERCC6/CSB (via CIM motif); promoting recruitment to lesion-stalled RNA polymerase II (Pol II). Interacts with KIAA1530/UVSSA. Interacts with a subunit of RNA polymerase II TFIIH.

The protein localises to the nucleus. The protein resides in the chromosome. It is found in the nucleus matrix. The protein operates within protein modification; protein ubiquitination. In terms of biological role, substrate-recognition component of the CSA complex, a DCX (DDB1-CUL4-X-box) E3 ubiquitin-protein ligase complex, involved in transcription-coupled nucleotide excision repair (TC-NER), a process during which RNA polymerase II-blocking lesions are rapidly removed from the transcribed strand of active genes. Following recruitment to lesion-stalled RNA polymerase II (Pol II), the CSA complex mediates ubiquitination of Pol II subunit POLR2A/RPB1 at 'Lys-1268', a critical TC-NER checkpoint, governing RNA Pol II stability and initiating DNA damage excision by TFIIH recruitment. The CSA complex also promotes the ubiquitination and subsequent proteasomal degradation of ERCC6/CSB in a UV-dependent manner; ERCC6 degradation is essential for the recovery of RNA synthesis after transcription-coupled repair. Also plays a role in DNA double-strand breaks (DSSBs) repair by non-homologous end joining (NHEJ). The protein is DNA excision repair protein ERCC-8 of Homo sapiens (Human).